Here is a 553-residue protein sequence, read N- to C-terminus: Undecaprenyl phosphate-alpha-4-amino-4-deoxy-L-arabinose arabinosyl transferase (553 aa).

Helical transmembrane passes span 8-28 (LLFS…RALW), 81-101 (FAVR…VYWL), 113-133 (LLSA…SYAV), 136-156 (PMVT…AQSA), 176-196 (LMTK…PWMI), 204-224 (LLLF…PWAI), 255-275 (APFW…VGLL), 289-309 (NSGS…FSLA), 313-333 (LPTY…HHGI), 351-371 (VAFG…WGLV), 384-404 (VLLG…CLVA), and 412-432 (AALC…DKVI).

It belongs to the glycosyltransferase 83 family.

It localises to the cell inner membrane. The catalysed reaction is 4-amino-4-deoxy-alpha-L-arabinopyranosyl di-trans,octa-cis-undecaprenyl phosphate + lipid IVA = lipid IIA + di-trans,octa-cis-undecaprenyl phosphate.. The protein operates within lipopolysaccharide metabolism; 4-amino-4-deoxy-beta-L-arabinose-lipid A biosynthesis. Catalyzes the transfer of the L-Ara4N moiety of the glycolipid undecaprenyl phosphate-alpha-L-Ara4N to lipid A. The modified arabinose is attached to lipid A and is required for resistance to polymyxin and cationic antimicrobial peptides. In Erwinia tasmaniensis (strain DSM 17950 / CFBP 7177 / CIP 109463 / NCPPB 4357 / Et1/99), this protein is Undecaprenyl phosphate-alpha-4-amino-4-deoxy-L-arabinose arabinosyl transferase.